Consider the following 195-residue polypeptide: Myelin-associated neurite-outgrowth inhibitor (195 aa).

An N-acetylmethionine modification is found at Met-1. Residues 1 to 18 (MNPVYSPGSSGVPYANAK) lie on the Cytoplasmic side of the membrane. A Phosphoserine modification is found at Ser-6. Residues 19 to 42 (GIGYPAGFPMGYAAAAPAYSPNMY) traverse the membrane as a helical segment. Residues 43–142 (PGANPTFQTG…PAPIPPPRGN (100 aa)) lie on the Extracellular side of the membrane. Asn-46 is a glycosylation site (N-linked (GlcNAc...) asparagine). The helical transmembrane segment at 143-164 (GVTMGMVAGTTMAMSAGTLLTA) threads the bilayer. Residues 165–195 (HSPTPVAPHPVTVPTYRAPGTPTYSYVPPQW) are Cytoplasmic-facing.

It belongs to the FAM168 family. In terms of assembly, may form homodimers. May interact with DAZAP2, FAM168A, PRDX6, RBM6, TMTC1 and YPEL2. Interacts with CDC27. Post-translationally, N-glycosylated. As to expression, expressed in the brain, within neuronal axonal fibers and associated with myelin sheets (at protein level). Expression tends to be lower in the brain of Alzheimer disease patients compared to healthy individuals (at protein level).

Its subcellular location is the cytoplasm. It localises to the perinuclear region. The protein resides in the cell membrane. The protein localises to the cell projection. It is found in the axon. In terms of biological role, inhibitor of neuronal axonal outgrowth. Acts as a negative regulator of CDC42 and STAT3 and a positive regulator of STMN2. Positive regulator of CDC27. The sequence is that of Myelin-associated neurite-outgrowth inhibitor (FAM168B) from Homo sapiens (Human).